Here is a 329-residue protein sequence, read N- to C-terminus: Anthranilate phosphoribosyltransferase (329 aa).

Residues Gly-78, 81–82 (GD), Thr-86, 88–91 (NLST), 106–114 (KHGNRSASG), and Ser-118 contribute to the 5-phospho-alpha-D-ribose 1-diphosphate site. Gly-78 provides a ligand contact to anthranilate. Residue Ser-90 coordinates Mg(2+). Asn-109 contacts anthranilate. Arg-164 provides a ligand contact to anthranilate. Positions 221 and 222 each coordinate Mg(2+).

This sequence belongs to the anthranilate phosphoribosyltransferase family. In terms of assembly, homodimer. The cofactor is Mg(2+).

It carries out the reaction N-(5-phospho-beta-D-ribosyl)anthranilate + diphosphate = 5-phospho-alpha-D-ribose 1-diphosphate + anthranilate. It participates in amino-acid biosynthesis; L-tryptophan biosynthesis; L-tryptophan from chorismate: step 2/5. Catalyzes the transfer of the phosphoribosyl group of 5-phosphorylribose-1-pyrophosphate (PRPP) to anthranilate to yield N-(5'-phosphoribosyl)-anthranilate (PRA). In Pyrobaculum islandicum (strain DSM 4184 / JCM 9189 / GEO3), this protein is Anthranilate phosphoribosyltransferase.